The following is a 39-amino-acid chain: MASTGRIPLWLVATIGGIAVLTVLGLFFYGSYSGLGSSL.

A helical transmembrane segment spans residues 7 to 27; it reads IPLWLVATIGGIAVLTVLGLF.

It belongs to the PsbJ family. PSII is composed of 1 copy each of membrane proteins PsbA, PsbB, PsbC, PsbD, PsbE, PsbF, PsbH, PsbI, PsbJ, PsbK, PsbL, PsbM, PsbT, PsbX, PsbY, PsbZ, Psb30/Ycf12, at least 3 peripheral proteins of the oxygen-evolving complex and a large number of cofactors. It forms dimeric complexes.

It localises to the plastid. Its subcellular location is the chloroplast thylakoid membrane. In terms of biological role, one of the components of the core complex of photosystem II (PSII). PSII is a light-driven water:plastoquinone oxidoreductase that uses light energy to abstract electrons from H(2)O, generating O(2) and a proton gradient subsequently used for ATP formation. It consists of a core antenna complex that captures photons, and an electron transfer chain that converts photonic excitation into a charge separation. The sequence is that of Photosystem II reaction center protein J from Cyanidioschyzon merolae (strain NIES-3377 / 10D) (Unicellular red alga).